Here is a 196-residue protein sequence, read N- to C-terminus: Large ribosomal subunit protein uL10 (196 aa).

Residues 163–196 (GAPAAAEAPAAEEAPAAEAAETEAPAEAAATEEN) are disordered. Residues 164-196 (APAAAEAPAAEEAPAAEAAETEAPAEAAATEEN) are compositionally biased toward low complexity.

Belongs to the universal ribosomal protein uL10 family. Part of the ribosomal stalk of the 50S ribosomal subunit. The N-terminus interacts with L11 and the large rRNA to form the base of the stalk. The C-terminus forms an elongated spine to which L12 dimers bind in a sequential fashion forming a multimeric L10(L12)X complex.

Forms part of the ribosomal stalk, playing a central role in the interaction of the ribosome with GTP-bound translation factors. The sequence is that of Large ribosomal subunit protein uL10 from Arthrobacter sp. (strain FB24).